The following is a 270-amino-acid chain: Glutamate racemase (270 aa).

Substrate-binding positions include 7 to 8 and 39 to 40; these read DS and YG. Cys-70 serves as the catalytic Proton donor/acceptor. 71–72 is a substrate binding site; that stretch reads NT. Residue Cys-194 is the Proton donor/acceptor of the active site. 195-196 is a substrate binding site; it reads TH.

The protein belongs to the aspartate/glutamate racemases family.

It catalyses the reaction L-glutamate = D-glutamate. It functions in the pathway cell wall biogenesis; peptidoglycan biosynthesis. Its function is as follows. Provides the (R)-glutamate required for cell wall biosynthesis. This Paracoccus denitrificans (strain Pd 1222) protein is Glutamate racemase.